A 321-amino-acid chain; its full sequence is Methionyl-tRNA formyltransferase (321 aa).

Position 113-116 (113-116 (SILP)) interacts with (6S)-5,6,7,8-tetrahydrofolate.

This sequence belongs to the Fmt family.

It catalyses the reaction L-methionyl-tRNA(fMet) + (6R)-10-formyltetrahydrofolate = N-formyl-L-methionyl-tRNA(fMet) + (6S)-5,6,7,8-tetrahydrofolate + H(+). In terms of biological role, attaches a formyl group to the free amino group of methionyl-tRNA(fMet). The formyl group appears to play a dual role in the initiator identity of N-formylmethionyl-tRNA by promoting its recognition by IF2 and preventing the misappropriation of this tRNA by the elongation apparatus. This Vibrio atlanticus (strain LGP32) (Vibrio splendidus (strain Mel32)) protein is Methionyl-tRNA formyltransferase.